The following is a 108-amino-acid chain: MISSGKPWNGWPVPKRKVCWSENRGDWSEVSLTCQAICGLRSRSGTGSGNSRNGLKESGGSRSGPGKPRGNRKSSRRIRPRPTSEKPRGYWRSSWRRPRSWIERRKRP.

Over residues 39–68 (GLRSRSGTGSGNSRNGLKESGGSRSGPGKP) the composition is skewed to low complexity. The segment at 39-95 (GLRSRSGTGSGNSRNGLKESGGSRSGPGKPRGNRKSSRRIRPRPTSEKPRGYWRSSW) is disordered. The span at 69–80 (RGNRKSSRRIRP) shows a compositional bias: basic residues.

This is an uncharacterized protein from Acidithiobacillus ferridurans.